Here is a 94-residue protein sequence, read N- to C-terminus: MLQSNEYFDGKVKSIGFTSSSTGRASVGVMAEGEYTFGTAQPEEMTVVSGALNVLLPGETEWKVYAAGEVFNVPGNSEFHLQVAEPTSYLCRYL.

This sequence belongs to the nucleoside phosphorylase PpnP family.

The enzyme catalyses a purine D-ribonucleoside + phosphate = a purine nucleobase + alpha-D-ribose 1-phosphate. The catalysed reaction is adenosine + phosphate = alpha-D-ribose 1-phosphate + adenine. It carries out the reaction cytidine + phosphate = cytosine + alpha-D-ribose 1-phosphate. It catalyses the reaction guanosine + phosphate = alpha-D-ribose 1-phosphate + guanine. The enzyme catalyses inosine + phosphate = alpha-D-ribose 1-phosphate + hypoxanthine. The catalysed reaction is thymidine + phosphate = 2-deoxy-alpha-D-ribose 1-phosphate + thymine. It carries out the reaction uridine + phosphate = alpha-D-ribose 1-phosphate + uracil. It catalyses the reaction xanthosine + phosphate = alpha-D-ribose 1-phosphate + xanthine. Functionally, catalyzes the phosphorolysis of diverse nucleosides, yielding D-ribose 1-phosphate and the respective free bases. Can use uridine, adenosine, guanosine, cytidine, thymidine, inosine and xanthosine as substrates. Also catalyzes the reverse reactions. The protein is Pyrimidine/purine nucleoside phosphorylase of Klebsiella pneumoniae (strain 342).